A 1091-amino-acid chain; its full sequence is Protein diaphanous (1091 aa).

The segment at Met1–His37 is disordered. Residues Met1–Glu56 form a basic region region. Low complexity predominate over residues Ser25–Thr34. The 373-residue stretch at Ile59–Asp431 folds into the GBD/FH3 domain. A coiled-coil region spans residues Lys455–Asn496. Disordered regions lie at residues Ala499–Gly589, Arg994–Ala1021, and Gly1039–Val1072. Residues Pro512–Pro572 show a composition bias toward pro residues. The FH1 domain occupies Pro512–Pro596. Positions Pro601–Gln1001 constitute an FH2 domain. The span at Arg994–Gln1010 shows a compositional bias: basic and acidic residues. Positions Pro1022–Pro1054 constitute a DAD domain.

It belongs to the formin homology family. Diaphanous subfamily. May interact (via CBD/FH3 domain) with Rho1.

The protein localises to the cytoplasm. It localises to the cytoskeleton. Its subcellular location is the cleavage furrow. It is found in the apical cell membrane. In terms of biological role, required for cytokinesis in both mitosis and meiosis. Has a role in actin cytoskeleton organization and is essential for many, if not all, actin-mediated events involving membrane invagination. May serve as a mediator between signaling molecules and actin organizers at specific phases of the cell cycle. Possible component of the contractile ring or may control its function. The protein is Protein diaphanous (dia) of Drosophila melanogaster (Fruit fly).